The following is a 204-amino-acid chain: Probable nicotinate-nucleotide adenylyltransferase (204 aa).

The protein belongs to the NadD family.

The enzyme catalyses nicotinate beta-D-ribonucleotide + ATP + H(+) = deamido-NAD(+) + diphosphate. The protein operates within cofactor biosynthesis; NAD(+) biosynthesis; deamido-NAD(+) from nicotinate D-ribonucleotide: step 1/1. Its function is as follows. Catalyzes the reversible adenylation of nicotinate mononucleotide (NaMN) to nicotinic acid adenine dinucleotide (NaAD). This Mycobacterium sp. (strain JLS) protein is Probable nicotinate-nucleotide adenylyltransferase.